Consider the following 328-residue polypeptide: P2Y purinoceptor 3 (328 aa).

Topologically, residues 1 to 22 (MSMANFTGGRNSCTFHEEFKQV) are extracellular. A glycan (N-linked (GlcNAc...) asparagine) is linked at Asn-5. A helical membrane pass occupies residues 23–43 (LLPLVYSVVFLLGLPLNAVVI). The Cytoplasmic segment spans residues 44–57 (GQIWLARKALTRTT). The helical transmembrane segment at 58-78 (IYMLNLAMADLLYVCSLPLLI) threads the bilayer. At 79–96 (YNYTQKDYWPFGDFTCKF) the chain is on the extracellular side. A disulfide bridge links Cys-94 with Cys-172. The chain crosses the membrane as a helical span at residues 97-117 (VRFQFYTNLHGSILFLTCISV). Residues 118–139 (QRYMGICHPLASWHKKKGKKLT) are Cytoplasmic-facing. A helical transmembrane segment spans residues 140-160 (WLVCAAVWFIVIAQCLPTFVF). Residues 161 to 189 (ASTGTQRNRTVCYDLSPPDRSTSYFPYGI) are Extracellular-facing. Residues 190 to 210 (TLTITGFLLPFAAILACYCSM) traverse the membrane as a helical segment. Over 211 to 231 (ARILCQKDELIGLAVHKKKDK) the chain is Cytoplasmic. A helical transmembrane segment spans residues 232–252 (AVRMIIIVVIVFSISFFPFHL). Residues 253–275 (TKTIYLIVRSSASLPCPTLQAFA) are Extracellular-facing. The helical transmembrane segment at 276–298 (IAYKCTRPFASMNSVLDPILFYF) threads the bilayer. At 299 to 323 (TQRKFRESTRYLLDKMSSKWRQDHC) the chain is on the cytoplasmic side.

The protein belongs to the G-protein coupled receptor 1 family.

It is found in the cell membrane. Receptor for extracellular ADP &gt; UTP &gt; ATP = UDP. The activity of this receptor is mediated by G proteins which activate a phosphatidylinositol-calcium second messenger system. This Gallus gallus (Chicken) protein is P2Y purinoceptor 3 (P2RY3).